A 349-amino-acid chain; its full sequence is UDP-glucose 4-epimerase (349 aa).

Residues 10–12 (GFI), 31–35 (DNFAN), 66–67 (DV), and Lys-92 contribute to the NAD(+) site. Residue 132-134 (SAT) coordinates substrate. Tyr-158 serves as the catalytic Proton acceptor. NAD(+) is bound by residues Lys-162 and Tyr-186. Residues 186–188 (YFN), 207–209 (NNL), 225–227 (TIY), Arg-240, and 303–306 (RPGD) contribute to the substrate site.

This sequence belongs to the NAD(P)-dependent epimerase/dehydratase family. NAD(+) is required as a cofactor. In terms of tissue distribution, expressed in gonads, vulva, intestine, hypdermis and nervous system.

The catalysed reaction is UDP-alpha-D-glucose = UDP-alpha-D-galactose. The enzyme catalyses UDP-N-acetyl-alpha-D-glucosamine = UDP-N-acetyl-alpha-D-galactosamine. Its pathway is carbohydrate metabolism; galactose metabolism. Its function is as follows. Catalyzes two distinct but analogous reactions: the reversible epimerization of UDP-glucose to UDP-galactose and the reversible epimerization of UDP-N-acetylglucosamine to UDP-N-acetylgalactosamine. The reaction with UDP-Gal plays a critical role in the Leloir pathway of galactose catabolism in which galactose is converted to the glycolytic intermediate glucose 6-phosphate. It contributes to the catabolism of dietary galactose and enables the endogenous biosynthesis of both UDP-Gal and UDP-GalNAc when exogenous sources are limited. Both UDP-sugar interconversions are important for the synthesis of glycoproteins and glycolipids. This chain is UDP-glucose 4-epimerase, found in Caenorhabditis elegans.